We begin with the raw amino-acid sequence, 462 residues long: BPI fold-containing family B member 2 (462 aa).

Residues 1–22 (MARACSLGLLLLLLLLLRTVVT) form the signal peptide. Thr55 is modified (phosphothreonine). Ser63 carries the post-translational modification Phosphoserine. The N-linked (GlcNAc...) asparagine glycan is linked to Asn99. A disulfide bridge links Cys140 with Cys177. N-linked (GlcNAc...) asparagine glycans are attached at residues Asn297 and Asn336.

The protein belongs to the BPI/LBP/Plunc superfamily. BPI/LBP family.

It localises to the secreted. The sequence is that of BPI fold-containing family B member 2 (Bpifb2) from Mus musculus (Mouse).